Consider the following 130-residue polypeptide: Ribosome-binding factor A (130 aa).

Positions 111–130 (RDLDDVGPEATSSDEDAEQR) are disordered.

Belongs to the RbfA family. As to quaternary structure, monomer. Binds 30S ribosomal subunits, but not 50S ribosomal subunits or 70S ribosomes.

The protein localises to the cytoplasm. In terms of biological role, one of several proteins that assist in the late maturation steps of the functional core of the 30S ribosomal subunit. Associates with free 30S ribosomal subunits (but not with 30S subunits that are part of 70S ribosomes or polysomes). Required for efficient processing of 16S rRNA. May interact with the 5'-terminal helix region of 16S rRNA. This is Ribosome-binding factor A from Xanthomonas euvesicatoria pv. vesicatoria (strain 85-10) (Xanthomonas campestris pv. vesicatoria).